We begin with the raw amino-acid sequence, 245 residues long: Tetraspanin-16 (245 aa).

Topologically, residues 1 to 13 (MAEIHTPYSSLKK) are cytoplasmic. A helical transmembrane segment spans residues 14–34 (LLSLLNGFVAVSGIILVGLGI). At 35–37 (GGK) the chain is on the extracellular side. The helical transmembrane segment at 38–58 (CGGASLTNVLGLSSAYLLHVG) threads the bilayer. Asparagine 59 is a topological domain (cytoplasmic). A helical transmembrane segment spans residues 60-80 (LCLVMGCITVLLGCAGWYGAT). The Extracellular portion of the chain corresponds to 81–94 (KESRGTLLFCILSM). Residues 95 to 115 (VIVLIMEVTAATVVLLFFPIV) traverse the membrane as a helical segment. At 116 to 245 (GDVALEHTFV…VAQAGLELLA (130 aa)) the chain is on the cytoplasmic side.

This sequence belongs to the tetraspanin (TM4SF) family. As to expression, broadly expressed in most human tissues and cell lines including neural and bone marrow derived tissues.

The protein localises to the membrane. In Homo sapiens (Human), this protein is Tetraspanin-16 (TSPAN16).